Consider the following 1152-residue polypeptide: Syntaxin-binding protein 5 (1152 aa).

The segment at 14–35 is disordered; the sequence is TAGSSSASQQQQQQQHPPGNRE. A compositionally biased stretch (low complexity) spans 17–28; sequence SSSASQQQQQQQ. WD repeat units lie at residues 62–95, 102–141, 146–182, 201–235, 241–273, 295–337, 345–379, 401–478, 506–620, and 634–696; these read SALA…CYCQ, VIQL…SLKF, VTFC…GYVI, HISD…DYRY, IHSV…PAKP, PILK…KSTA, IVDF…LIDL, TCCE…YKLK, QIIS…ELVI, and TSLA…SGAG. Disordered stretches follow at residues 555-596 and 675-731; these read VDTP…GLRD and SNDP…QKVN. The residue at position 693 (serine 693) is a Phosphoserine. Low complexity predominate over residues 713–722; that stretch reads SPTSGSSSPH. Phosphoserine occurs at positions 724 and 760. The residue at position 763 (threonine 763) is a Phosphothreonine. A Phosphoserine modification is found at serine 783. Threonine 785 is modified (phosphothreonine). Serine 786 carries the phosphoserine modification. WD repeat units lie at residues 795-852, 861-935, 940-984, and 998-1021; these read ISAL…SGTI, RMAF…QSCA, ITET…LDVY, and CFAN…TYSQ. Over residues 883 to 893 the composition is skewed to basic and acidic residues; it reads NVAEEKDEKEK. The disordered stretch occupies residues 883-907; sequence NVAEEKDEKEKLKKRRPVSVSPSSS. Serine 901 and serine 903 each carry phosphoserine. Threonine 1040 carries the post-translational modification Phosphothreonine. Residues serine 1059 and serine 1132 each carry the phosphoserine modification. The v-SNARE coiled-coil homology domain maps to 1087 to 1147; sequence GIEGVKGAAS…HEMMLKYKDK (61 aa).

This sequence belongs to the WD repeat L(2)GL family. Part of a complex that contains STX1, STXBP5, SNAP25 and SYT1. Interacts with STX1A and STX4A via its v-SNARE homology domain. Part of a complex that contains STXBP5, STX4A and SNAP23. In terms of tissue distribution, detected in heart, spleen, lung, skeletal muscle, liver and kidney (at protein level). Detected in brain, particularly in the olfactory bulb and in hippocampus. Detected in the tenia tecta and in the piriform layer of the brain cortex.

Its subcellular location is the cytoplasm. It is found in the cell membrane. The protein resides in the membrane. Functionally, plays a regulatory role in calcium-dependent exocytosis and neurotransmitter release. Inhibits membrane fusion between transport vesicles and the plasma membrane. May modulate the assembly of trans-SNARE complexes between transport vesicles and the plasma membrane. Competes with STXBP1 for STX1 binding. Inhibits translocation of GLUT4 from intracellular vesicles to the plasma membrane. In Mus musculus (Mouse), this protein is Syntaxin-binding protein 5 (Stxbp5).